The sequence spans 826 residues: DNA mismatch repair protein MutS (826 aa).

An ATP-binding site is contributed by glycine 622–serine 629.

This sequence belongs to the DNA mismatch repair MutS family.

Its function is as follows. This protein is involved in the repair of mismatches in DNA. It is possible that it carries out the mismatch recognition step. This protein has a weak ATPase activity. In Chlamydia abortus (strain DSM 27085 / S26/3) (Chlamydophila abortus), this protein is DNA mismatch repair protein MutS.